Here is a 644-residue protein sequence, read N- to C-terminus: Exoribonuclease 2 (644 aa).

Positions arginine 189–lysine 516 constitute an RNB domain. Residues asparagine 561 to alanine 643 form the S1 motif domain.

Belongs to the RNR ribonuclease family. RNase II subfamily.

The protein resides in the cytoplasm. It carries out the reaction Exonucleolytic cleavage in the 3'- to 5'-direction to yield nucleoside 5'-phosphates.. Functionally, involved in mRNA degradation. Hydrolyzes single-stranded polyribonucleotides processively in the 3' to 5' direction. The polypeptide is Exoribonuclease 2 (Salmonella enteritidis PT4 (strain P125109)).